Consider the following 390-residue polypeptide: Chaperone protein DnaJ (390 aa).

In terms of domain architecture, J spans 6-70; that stretch reads DYYEILGVPR…QKRAQYDQFG (65 aa). A CR-type zinc finger spans residues 146–228; it reads GSEKEIYVTR…CHGTGKVRRK (83 aa). Zn(2+) is bound by residues Cys-159, Cys-162, Cys-176, Cys-179, Cys-202, Cys-205, Cys-216, and Cys-219. CXXCXGXG motif repeat units lie at residues 159 to 166, 176 to 183, 202 to 209, and 216 to 223; these read CPTCKGKG, CDMCNGTG, CPKCHGTG, and CHECHGTG.

Belongs to the DnaJ family. As to quaternary structure, homodimer. Requires Zn(2+) as cofactor.

It localises to the cytoplasm. Its function is as follows. Participates actively in the response to hyperosmotic and heat shock by preventing the aggregation of stress-denatured proteins and by disaggregating proteins, also in an autonomous, DnaK-independent fashion. Unfolded proteins bind initially to DnaJ; upon interaction with the DnaJ-bound protein, DnaK hydrolyzes its bound ATP, resulting in the formation of a stable complex. GrpE releases ADP from DnaK; ATP binding to DnaK triggers the release of the substrate protein, thus completing the reaction cycle. Several rounds of ATP-dependent interactions between DnaJ, DnaK and GrpE are required for fully efficient folding. Also involved, together with DnaK and GrpE, in the DNA replication of plasmids through activation of initiation proteins. In Dictyoglomus thermophilum (strain ATCC 35947 / DSM 3960 / H-6-12), this protein is Chaperone protein DnaJ.